We begin with the raw amino-acid sequence, 320 residues long: MIKKIGILTSGGDSPGMNAIIRSVVCTALNHNIEVKGIYNGFLGLYNNDMKLLKYSHVANLLNQGGTILGSSRFLEFKLEKTRKIAIKNIYKRKIDCLIIIGGDGSYKAANFLTNMGVPCIGIPGTIDNDVSGTDYTVGYFTALETVVDAIDKLRDTSASHHRISIIEIMGRYCGDLTLSAAIAGGCEFIVIPEIIYQKELLLLEIQKSIKKGNKHSIVAITEHICDVNKLAKYIQKKTFKETRATILGHIQRGGKPVAYDRILASRMGIYAIQLLLKGYKGQCIGVINNKIVHHNINYALKNMKKIFKKDLLNSIKKIY.

ATP-binding positions include Gly12, 73–74 (RF), and 103–106 (GDGS). Asp104 lines the Mg(2+) pocket. 126 to 128 (TID) lines the substrate pocket. Asp128 (proton acceptor) is an active-site residue. Arg155 contacts ADP. Residues Arg163 and 170–172 (MGR) each bind substrate. ADP contacts are provided by residues 186-188 (GCE) and Lys212. Substrate contacts are provided by residues Glu223, Arg244, and 250 to 253 (HIQR).

Belongs to the phosphofructokinase type A (PFKA) family. ATP-dependent PFK group I subfamily. Prokaryotic clade 'B1' sub-subfamily. Homotetramer. Mg(2+) is required as a cofactor.

The protein resides in the cytoplasm. The enzyme catalyses beta-D-fructose 6-phosphate + ATP = beta-D-fructose 1,6-bisphosphate + ADP + H(+). Its pathway is carbohydrate degradation; glycolysis; D-glyceraldehyde 3-phosphate and glycerone phosphate from D-glucose: step 3/4. Its activity is regulated as follows. Allosterically activated by ADP and other diphosphonucleosides, and allosterically inhibited by phosphoenolpyruvate. Functionally, catalyzes the phosphorylation of D-fructose 6-phosphate to fructose 1,6-bisphosphate by ATP, the first committing step of glycolysis. The polypeptide is ATP-dependent 6-phosphofructokinase (Buchnera aphidicola subsp. Cinara cedri (strain Cc)).